A 190-amino-acid chain; its full sequence is Elongation factor P-like protein (190 aa).

This sequence belongs to the elongation factor P family.

The sequence is that of Elongation factor P-like protein from Serratia proteamaculans (strain 568).